Here is a 322-residue protein sequence, read N- to C-terminus: Transaldolase (322 aa).

The active-site Schiff-base intermediate with substrate is Lys136.

Belongs to the transaldolase family. Type 1 subfamily. In terms of assembly, homodimer.

The protein localises to the cytoplasm. It carries out the reaction D-sedoheptulose 7-phosphate + D-glyceraldehyde 3-phosphate = D-erythrose 4-phosphate + beta-D-fructose 6-phosphate. Its pathway is carbohydrate degradation; pentose phosphate pathway; D-glyceraldehyde 3-phosphate and beta-D-fructose 6-phosphate from D-ribose 5-phosphate and D-xylulose 5-phosphate (non-oxidative stage): step 2/3. Its function is as follows. Transaldolase is important for the balance of metabolites in the pentose-phosphate pathway. This is Transaldolase from Xanthomonas oryzae pv. oryzae (strain KACC10331 / KXO85).